Reading from the N-terminus, the 215-residue chain is tRNA (guanine-N(7)-)-methyltransferase (215 aa).

S-adenosyl-L-methionine-binding residues include glutamate 43, glutamate 68, aspartate 95, and aspartate 117. Residue aspartate 117 is part of the active site. Substrate is bound by residues lysine 121, aspartate 153, and threonine 190–glutamate 193.

The protein belongs to the class I-like SAM-binding methyltransferase superfamily. TrmB family.

It carries out the reaction guanosine(46) in tRNA + S-adenosyl-L-methionine = N(7)-methylguanosine(46) in tRNA + S-adenosyl-L-homocysteine. It participates in tRNA modification; N(7)-methylguanine-tRNA biosynthesis. Functionally, catalyzes the formation of N(7)-methylguanine at position 46 (m7G46) in tRNA. The sequence is that of tRNA (guanine-N(7)-)-methyltransferase from Staphylococcus epidermidis (strain ATCC 35984 / DSM 28319 / BCRC 17069 / CCUG 31568 / BM 3577 / RP62A).